Reading from the N-terminus, the 154-residue chain is Transcriptional repressor NrdR (154 aa).

Residues 3 to 34 (CPFCGNENTRVIDTRAAEDGFAIKRRRECENC) fold into a zinc finger. The ATP-cone domain maps to 49-139 (LIVVKKDGSK…VYRQFKDVNS (91 aa)).

This sequence belongs to the NrdR family. Zn(2+) is required as a cofactor.

Negatively regulates transcription of bacterial ribonucleotide reductase nrd genes and operons by binding to NrdR-boxes. The protein is Transcriptional repressor NrdR of Carboxydothermus hydrogenoformans (strain ATCC BAA-161 / DSM 6008 / Z-2901).